The primary structure comprises 182 residues: Bifunctional dihydrofolate reductase-thymidylate synthase (182 aa).

The region spanning 1-182 is the DHFR domain; sequence AICACCKVLN…YFTRINNAYT (182 aa). 25 to 31 contacts NADP(+); sequence GLGNAGG. Residue Asp40 participates in substrate binding. Residues 93–95 and 114–117 each bind NADP(+); these read KTS and LSRT. Positions 154, 160, and 175 each coordinate substrate. Residue 155–162 coordinates NADP(+); the sequence is GGASVYKE.

The protein in the N-terminal section; belongs to the dihydrofolate reductase family. It in the C-terminal section; belongs to the thymidylate synthase family. As to quaternary structure, homodimer.

The catalysed reaction is (6S)-5,6,7,8-tetrahydrofolate + NADP(+) = 7,8-dihydrofolate + NADPH + H(+). It catalyses the reaction dUMP + (6R)-5,10-methylene-5,6,7,8-tetrahydrofolate = 7,8-dihydrofolate + dTMP. It participates in cofactor biosynthesis; tetrahydrofolate biosynthesis; 5,6,7,8-tetrahydrofolate from 7,8-dihydrofolate: step 1/1. Functionally, bifunctional enzyme. Involved in de novo dTMP biosynthesis. Key enzyme in folate metabolism. Catalyzes an essential reaction for de novo glycine and purine synthesis, DNA precursor synthesis, and for the conversion of dUMP to dTMP. This is Bifunctional dihydrofolate reductase-thymidylate synthase from Plasmodium vinckei.